Here is a 349-residue protein sequence, read N- to C-terminus: Short-wave-sensitive opsin 1 (349 aa).

At 1 to 34 (MSKMSEEEEFLLFKNISLVGPWDGPQYHLAPVWA) the chain is on the extracellular side. The N-linked (GlcNAc...) asparagine glycan is linked to asparagine 15. Residues 35-59 (FHLQAVFMGFVFFVGTPLNATVLVA) traverse the membrane as a helical segment. Residues 60-71 (TLRYRKLRQPLN) are Cytoplasmic-facing. The helical transmembrane segment at 72–97 (YILVNVSLGGFIYCIFSVFIVFITSC) threads the bilayer. Residues 98-111 (YGYFVFGRHVCALE) lie on the Extracellular side of the membrane. A disulfide bridge links cysteine 108 with cysteine 185. The chain crosses the membrane as a helical span at residues 112–131 (AFLGCTAGLVTGWSLAFLAF). The Cytoplasmic segment spans residues 132-150 (ERYIIICKPFGNFRFSSKH). Residues 151–174 (ALMVVVATWTIGIGVSIPPFFGWS) traverse the membrane as a helical segment. The Extracellular portion of the chain corresponds to 175-200 (RFVPEGLQCSCGPDWYTVGTKYYSEY). Residues 201–228 (YTWFLFIFCYIVPLSLICFSYSQLLGAL) form a helical membrane-spanning segment. The Cytoplasmic segment spans residues 229-250 (RAVAAQQQESASTQKAEREVSH). Residues 251-274 (MVVVMVGSFCLCYTPYAALAMYIV) traverse the membrane as a helical segment. The Extracellular segment spans residues 275 to 282 (NNRNHGVD). A helical membrane pass occupies residues 283–307 (LRLVTIPAFFSKSACVYNPIIYCFM). Lysine 294 is modified (N6-(retinylidene)lysine). At 308–349 (NKQFRACIMEMVCGKPMTDESELSSSQKTEVSTVSSSQVGPN) the chain is on the cytoplasmic side. Residues 327–349 (ESELSSSQKTEVSTVSSSQVGPN) form a disordered region. The span at 330–349 (LSSSQKTEVSTVSSSQVGPN) shows a compositional bias: polar residues.

Belongs to the G-protein coupled receptor 1 family. Opsin subfamily. Post-translationally, phosphorylated on some or all of the serine and threonine residues present in the C-terminal region.

It is found in the cell membrane. It localises to the photoreceptor inner segment. The protein localises to the cell projection. Its subcellular location is the cilium. The protein resides in the photoreceptor outer segment. It is found in the cytoplasm. It localises to the perinuclear region. Visual pigments are the light-absorbing molecules that mediate vision. They consist of an apoprotein, opsin, covalently linked to cis-retinal. Required for the maintenance of cone outer segment organization in the ventral retina, but not essential for the maintenance of functioning cone photoreceptors. Involved in ensuring correct abundance and localization of retinal membrane proteins. May increase spectral sensitivity in dim light. This is Short-wave-sensitive opsin 1 (OPN1SW) from Bos taurus (Bovine).